The sequence spans 1036 residues: uncharacterized protein (1036 aa).

This is an uncharacterized protein from Schizosaccharomyces pombe (strain 972 / ATCC 24843) (Fission yeast).